The chain runs to 149 residues: CyanoQ (149 aa).

The signal sequence occupies residues 1–21 (MSRLRSLLSLILVLVTTVLVS). Residue Cys-22 is the site of N-palmitoyl cysteine attachment. Cys-22 is lipidated: S-diacylglycerol cysteine.

This sequence belongs to the PsbQ family. CyanoQ subfamily. As to quaternary structure, PSII is composed of 1 copy each of membrane proteins PsbA, PsbB, PsbC, PsbD, PsbE, PsbF, PsbH, PsbI, PsbJ, PsbK, PsbL, PsbM, PsbT, PsbX, PsbY, PsbZ, Psb30/Ycf12, peripheral proteins PsbO, CyanoQ (PsbQ), PsbU, PsbV and a large number of cofactors. It forms dimeric complexes. Pull-down experiments with His-tagged PsbQ pull down dimeric, but not monomeric, PSII. In terms of processing, the N-terminus is blocked. Upon expression in E.coli the N-terminus is modified with a diacylglycerol and an acyl group bound to two palmitates and one palmitoleate.

Its subcellular location is the cellular thylakoid membrane. Functionally, one of the extrinsic, lumenal subunits of photosystem II (PSII), which stabilize and protect the oxygen-evolving complex. PSII is a light-driven water plastoquinone oxidoreductase, using light energy to abstract electrons from H(2)O, generating a proton gradient subsequently used for ATP formation. Plays a role in the stability of the oxygen-evolving center on the luminal side of PSII. Required for optimal photoautotrophic growth in the absence of Ca(2+) or Cl(-), functions in optimizing PSII water oxidation/O(2) evolving activity. Requires PsbO to bind to PSII. The protein is CyanoQ of Synechocystis sp. (strain ATCC 27184 / PCC 6803 / Kazusa).